Reading from the N-terminus, the 98-residue chain is Aspartyl/glutamyl-tRNA(Asn/Gln) amidotransferase subunit C (98 aa).

Residues 75 to 98 (EQALSGAPDSDDNRFKVPAILDEA) are disordered.

It belongs to the GatC family. Heterotrimer of A, B and C subunits.

It carries out the reaction L-glutamyl-tRNA(Gln) + L-glutamine + ATP + H2O = L-glutaminyl-tRNA(Gln) + L-glutamate + ADP + phosphate + H(+). The enzyme catalyses L-aspartyl-tRNA(Asn) + L-glutamine + ATP + H2O = L-asparaginyl-tRNA(Asn) + L-glutamate + ADP + phosphate + 2 H(+). Allows the formation of correctly charged Asn-tRNA(Asn) or Gln-tRNA(Gln) through the transamidation of misacylated Asp-tRNA(Asn) or Glu-tRNA(Gln) in organisms which lack either or both of asparaginyl-tRNA or glutaminyl-tRNA synthetases. The reaction takes place in the presence of glutamine and ATP through an activated phospho-Asp-tRNA(Asn) or phospho-Glu-tRNA(Gln). The chain is Aspartyl/glutamyl-tRNA(Asn/Gln) amidotransferase subunit C from Pseudarthrobacter chlorophenolicus (strain ATCC 700700 / DSM 12829 / CIP 107037 / JCM 12360 / KCTC 9906 / NCIMB 13794 / A6) (Arthrobacter chlorophenolicus).